Consider the following 139-residue polypeptide: Large ribosomal subunit protein uL16 (139 aa).

This sequence belongs to the universal ribosomal protein uL16 family. In terms of assembly, part of the 50S ribosomal subunit.

In terms of biological role, binds 23S rRNA and is also seen to make contacts with the A and possibly P site tRNAs. This Treponema denticola (strain ATCC 35405 / DSM 14222 / CIP 103919 / JCM 8153 / KCTC 15104) protein is Large ribosomal subunit protein uL16.